Here is a 513-residue protein sequence, read N- to C-terminus: GMP synthase [glutamine-hydrolyzing] (513 aa).

Positions Met8 to Lys198 constitute a Glutamine amidotransferase type-1 domain. The active-site Nucleophile is Cys85. Active-site residues include His172 and Glu174. Residues Trp199–Arg388 enclose the GMPS ATP-PPase domain. Ser226 to Ser232 is an ATP binding site.

Homodimer.

It catalyses the reaction XMP + L-glutamine + ATP + H2O = GMP + L-glutamate + AMP + diphosphate + 2 H(+). It participates in purine metabolism; GMP biosynthesis; GMP from XMP (L-Gln route): step 1/1. Functionally, catalyzes the synthesis of GMP from XMP. In Bacillus pumilus (strain SAFR-032), this protein is GMP synthase [glutamine-hydrolyzing].